A 56-amino-acid polypeptide reads, in one-letter code: Large ribosomal subunit protein bL33 (56 aa).

This sequence belongs to the bacterial ribosomal protein bL33 family.

This is Large ribosomal subunit protein bL33 from Anaplasma marginale (strain Florida).